Consider the following 445-residue polypeptide: D-serine transporter DsdX (445 aa).

At 1 to 4 the chain is on the cytoplasmic side; that stretch reads MHSQ. A helical membrane pass occupies residues 5–25; that stretch reads IWVVSTLLISIVLIVLTIVKF. Topologically, residues 26 to 28 are periplasmic; sequence KFH. Residues 29–49 form a helical membrane-spanning segment; that stretch reads PFLALLLASFFVGTMMGMGPL. Over 50-56 the chain is Cytoplasmic; that stretch reads DMVNAIE. A helical transmembrane segment spans residues 57–77; sequence SGIGGTLGFLAAVIGLGTILG. Residues 78 to 105 lie on the Periplasmic side of the membrane; sequence KMMEVSGAAERIGLTLQRCRWLSVDVIM. The chain crosses the membrane as a helical span at residues 106–126; that stretch reads VLVGLICGITLFVEVGVVLLI. Residues 127-139 lie on the Cytoplasmic side of the membrane; that stretch reads PLAFSIAKKTNTS. The helical transmembrane segment at 140 to 160 threads the bilayer; it reads LLKLAIPLCTALMAVHCVVPP. At 161 to 177 the chain is on the periplasmic side; that stretch reads HPAALYVANKLGADIGS. Residues 178–198 form a helical membrane-spanning segment; the sequence is VIVYGLLVGLMASLIGGPLFL. Over 199–223 the chain is Cytoplasmic; the sequence is KFLGQRLPFKPVPTEFADLKVRDEK. A helical transmembrane segment spans residues 224–244; it reads TLPSLGATLFTILLPIALMLV. Residues 245–257 are Periplasmic-facing; it reads KTIAELNMARESG. Residues 258–278 traverse the membrane as a helical segment; that stretch reads LYILVEFIGNPITAMFIAVFV. At 279–301 the chain is on the cytoplasmic side; that stretch reads AYYVLGIRQHMSMGTMLTHTENG. Residues 302-322 traverse the membrane as a helical segment; sequence FGSIANILLIIGAGGAFNAIL. The Periplasmic portion of the chain corresponds to 323–342; the sequence is KSSSLADTLAVILSNMHMHP. Helical transmembrane passes span 343-363, 364-384, and 385-405; these read ILLAWLVALILHAAVGSATVA, MMGATAIVAPMLPLYPDISPE, and IIAIAIGSGAIGCTIVTDSLF. The Cytoplasmic segment spans residues 406-424; the sequence is WLVKQYCGATLNETFKYYT. A helical membrane pass occupies residues 425 to 445; the sequence is TATFIASVVALAGTFLLSFII.

It belongs to the GntP permease family.

Its subcellular location is the cell inner membrane. A D-serine-specific transporter, may function as a H(+) symporter. The polypeptide is D-serine transporter DsdX (Escherichia coli (strain K12)).